A 360-amino-acid polypeptide reads, in one-letter code: Dihydroorotate dehydrogenase (quinone) (360 aa).

Residues 65–69 (AGLDK) and threonine 89 contribute to the FMN site. Lysine 69 provides a ligand contact to substrate. 114 to 118 (NRLGF) is a binding site for substrate. Residues asparagine 147 and asparagine 180 each contribute to the FMN site. Asparagine 180 contacts substrate. Residue serine 183 is the Nucleophile of the active site. Asparagine 185 contacts substrate. Positions 225 and 253 each coordinate FMN. 254–255 (NT) provides a ligand contact to substrate. Residues glycine 276, glycine 305, and 326-327 (YT) contribute to the FMN site.

This sequence belongs to the dihydroorotate dehydrogenase family. Type 2 subfamily. As to quaternary structure, monomer. The cofactor is FMN.

The protein localises to the cell membrane. The enzyme catalyses (S)-dihydroorotate + a quinone = orotate + a quinol. Its pathway is pyrimidine metabolism; UMP biosynthesis via de novo pathway; orotate from (S)-dihydroorotate (quinone route): step 1/1. Its function is as follows. Catalyzes the conversion of dihydroorotate to orotate with quinone as electron acceptor. The protein is Dihydroorotate dehydrogenase (quinone) of Verminephrobacter eiseniae (strain EF01-2).